Reading from the N-terminus, the 370-residue chain is Queuine tRNA-ribosyltransferase (370 aa).

Catalysis depends on Asp93, which acts as the Proton acceptor. Substrate contacts are provided by residues 93–97, Asp147, Gln190, and Gly217; that span reads DSGGF. The interval 248–254 is RNA binding; it reads GVGTPDY. The Nucleophile role is filled by Asp267. The RNA binding; important for wobble base 34 recognition stretch occupies residues 272–276; that stretch reads TRVAR. Zn(2+) contacts are provided by Cys305, Cys307, Cys310, and His336.

This sequence belongs to the queuine tRNA-ribosyltransferase family. In terms of assembly, homodimer. Within each dimer, one monomer is responsible for RNA recognition and catalysis, while the other monomer binds to the replacement base PreQ1. Zn(2+) serves as cofactor.

The enzyme catalyses 7-aminomethyl-7-carbaguanine + guanosine(34) in tRNA = 7-aminomethyl-7-carbaguanosine(34) in tRNA + guanine. It participates in tRNA modification; tRNA-queuosine biosynthesis. Its function is as follows. Catalyzes the base-exchange of a guanine (G) residue with the queuine precursor 7-aminomethyl-7-deazaguanine (PreQ1) at position 34 (anticodon wobble position) in tRNAs with GU(N) anticodons (tRNA-Asp, -Asn, -His and -Tyr). Catalysis occurs through a double-displacement mechanism. The nucleophile active site attacks the C1' of nucleotide 34 to detach the guanine base from the RNA, forming a covalent enzyme-RNA intermediate. The proton acceptor active site deprotonates the incoming PreQ1, allowing a nucleophilic attack on the C1' of the ribose to form the product. After dissociation, two additional enzymatic reactions on the tRNA convert PreQ1 to queuine (Q), resulting in the hypermodified nucleoside queuosine (7-(((4,5-cis-dihydroxy-2-cyclopenten-1-yl)amino)methyl)-7-deazaguanosine). The chain is Queuine tRNA-ribosyltransferase from Natranaerobius thermophilus (strain ATCC BAA-1301 / DSM 18059 / JW/NM-WN-LF).